A 794-amino-acid chain; its full sequence is Alpha-1,3-galactosidase B (794 aa).

A signal peptide spans 1–57 (MEGNLSFSLMEASGRSIFFLIEGIREQSIKNMFSRMFSWSFVVAACLAGLFPAQSQG). PbH1 repeat units follow at residues 468-499 (SEDF…HFSN), 609-631 (YPSV…LFTT), 632-654 (PERV…LLAG), 665-686 (CHEV…YQFT), and 707-728 (HRNV…LFAI).

It belongs to the glycosyl hydrolase 110 family. B subfamily.

It carries out the reaction Hydrolysis of terminal, non-reducing branched (1-&gt;3)-alpha-D-galactosidic residues, producing free D-galactose.. The catalysed reaction is Hydrolysis of terminal, non-reducing linear (1-&gt;3)-alpha-D-galactosidic residues, producing free D-galactose.. The enzyme catalyses Hydrolysis of terminal, non-reducing alpha-D-galactose residues in alpha-D-galactosides, including galactose oligosaccharides, galactomannans and galactolipids.. Its function is as follows. Alpha-galactosidase. Removes both branched alpha-1,3-linked galactose residues of blood group B antigens and linear alpha-1,3-linked galactose structures. This Akkermansia muciniphila (strain ATCC BAA-835 / DSM 22959 / JCM 33894 / BCRC 81048 / CCUG 64013 / CIP 107961 / Muc) protein is Alpha-1,3-galactosidase B (glaB).